Here is a 643-residue protein sequence, read N- to C-terminus: Protein RTF1 homolog (643 aa).

Disordered regions lie at residues Met-1–Glu-107 and Ile-124–Pro-262. Gly-2 is modified (N-acetylglycine). A compositionally biased stretch (basic and acidic residues) spans Lys-65–Arg-77. Ser-87 carries the phosphoserine modification. Basic and acidic residues predominate over residues Ile-124–Thr-157. The span at Ala-162–Arg-171 shows a compositional bias: low complexity. Residues Ser-172–Ala-188 show a composition bias toward basic and acidic residues. Low complexity predominate over residues Ser-225 to Asp-235. A Plus3 domain is found at Val-261–Ser-396.

In terms of assembly, component of the nuclear PAF1 complex (PAF1C), which consists of VIP2/ELF7/PAF1, VIP3/SKI8/WDR61, VIP4/LEO1, VIP5/RTF1, VIP6/ELF8/CTR9 and CDC73.

It is found in the nucleus. Its function is as follows. Component of the PAF1 complex (PAF1C) which is involved in histone modifications such as methylation on histone H3 'Lys-4' (H3K4me3). Involved in regulation of flowering time. Required for the expression of the flowering repressors and FLC and MADS-box genes of the MAF family. Involved in the control of seed dormancy and germination. This Arabidopsis thaliana (Mouse-ear cress) protein is Protein RTF1 homolog.